Here is a 405-residue protein sequence, read N- to C-terminus: Argininosuccinate synthase (405 aa).

ATP-binding positions include 10-18 (AYSGGLDTS) and Ala-37. L-citrulline is bound by residues Tyr-88 and Ser-93. Gly-118 lines the ATP pocket. L-aspartate-binding residues include Thr-120, Asn-124, and Asp-125. An L-citrulline-binding site is contributed by Asn-124. Arg-128, Ser-179, Ser-188, Glu-264, and Tyr-276 together coordinate L-citrulline.

This sequence belongs to the argininosuccinate synthase family. Type 1 subfamily. As to quaternary structure, homotetramer.

The protein localises to the cytoplasm. It carries out the reaction L-citrulline + L-aspartate + ATP = 2-(N(omega)-L-arginino)succinate + AMP + diphosphate + H(+). The protein operates within amino-acid biosynthesis; L-arginine biosynthesis; L-arginine from L-ornithine and carbamoyl phosphate: step 2/3. This chain is Argininosuccinate synthase, found in Pseudomonas fluorescens (strain ATCC BAA-477 / NRRL B-23932 / Pf-5).